Here is a 397-residue protein sequence, read N- to C-terminus: Serine protease MT3772 (397 aa).

4 helical membrane-spanning segments follow: residues 9 to 29 (IAVL…GALG), 32 to 52 (LSFG…PHIV), 62 to 82 (LFAA…AGVV), and 102 to 122 (VIGV…LAMP). Residues Cys-214 and Cys-395 are joined by a disulfide bond. His-235 functions as the Proton acceptor in the catalytic mechanism. Asp-264 is a catalytic residue. Ser-343 acts as the Charge relay system in catalysis.

The protein belongs to the peptidase S1C family. In terms of assembly, monomer.

It is found in the membrane. In terms of biological role, required for M.tuberculosis resistance to oxidative stress in addition to its role in resistance to acid, which is essential for virulence. The polypeptide is Serine protease MT3772 (Mycobacterium tuberculosis (strain CDC 1551 / Oshkosh)).